A 71-amino-acid chain; its full sequence is Natterin-P (71 aa).

A signal peptide spans 1–18; that stretch reads MKLLVLLVTLLVLSWTSA. A propeptide spanning residues 19–45 is cleaved from the precursor; sequence EDLGDQEILENNEDNNHESELGEPAAQ. Acidic residues predominate over residues 22–31; the sequence is GDQEILENNE. The interval 22 to 54 is disordered; that stretch reads GDQEILENNEDNNHESELGEPAAQHTDDETSQL. Cysteine 62 and cysteine 71 are joined by a disulfide.

This sequence belongs to the natterin family. Expressed by the venom gland.

The protein resides in the secreted. With respect to regulation, inhibited by tissue-kallikrein inhibitor TKI and trasylol. Plasma kallikrein inhibitor PKSI527 and classical inhibitors of serine-, metallo-, thiol- or aspartate-peptidases evokes a minor inhibition of the peptide digestion. In terms of biological role, shows nociceptive, edema-inducing and kininogenase activity with release of kallidin from low molecular weight kininogen. The cleavage occurs at Met-Lys bonds. This is Natterin-P from Thalassophryne nattereri (Copper Joe toadfish).